The chain runs to 326 residues: Eukaryotic translation initiation factor 3 subunit I (326 aa).

5 WD repeats span residues 8–47 (GHER…RLGT), 50–89 (GHQG…VIAS), 145–184 (MTES…KVVD), 188–227 (DHSA…CLKT), and 285–326 (GHFG…NIFE).

It belongs to the eIF-3 subunit I family. As to quaternary structure, component of the eukaryotic translation initiation factor 3 (eIF-3) complex. The eIF-3 complex interacts with pix.

Its subcellular location is the cytoplasm. Functionally, component of the eukaryotic translation initiation factor 3 (eIF-3) complex, which is involved in protein synthesis of a specialized repertoire of mRNAs and, together with other initiation factors, stimulates binding of mRNA and methionyl-tRNAi to the 40S ribosome. The eIF-3 complex specifically targets and initiates translation of a subset of mRNAs involved in cell proliferation. The protein is Eukaryotic translation initiation factor 3 subunit I of Drosophila erecta (Fruit fly).